A 983-amino-acid chain; its full sequence is Serine/threonine-protein kinase N2 (983 aa).

In terms of domain architecture, REM-1 1 spans 33–109; that stretch reads KLDFSDTMVQ…LQELNAHIVV (77 aa). Lys-77 carries the N6-acetyllysine modification. Residues 107 to 135 are disordered; sequence IVVSDPEDSTDCPRTPDTPNSDSRSSTSN. Residue Ser-110 is modified to Phosphoserine. Residues Thr-121 and Thr-124 each carry the phosphothreonine modification. Low complexity predominate over residues 121–135; that stretch reads TPDTPNSDSRSSTSN. 2 consecutive REM-1 domains span residues 121 to 203 and 204 to 284; these read TPDT…TNEL and AFDN…ELPR. Ser-301, Ser-305, Ser-359, and Ser-361 each carry phosphoserine. The disordered stretch occupies residues 351 to 382; that stretch reads TSVALPGWSPSDNRSSFMSRTSKSKSGSSRNL. Positions 352–472 constitute a C2 domain; sequence SVALPGWSPS…LYLEPQGTLF (121 aa). The span at 364–380 shows a compositional bias: low complexity; the sequence is RSSFMSRTSKSKSGSSR. A necessary to rescue apical junction formation region spans residues 381 to 462; that stretch reads NLLKTDDLSN…FLDNQRHGMC (82 aa). Residues Ser-534, Ser-582, Ser-619, and Ser-630 each carry the phosphoserine modification. The interval 553–588 is disordered; that stretch reads LAPPASDSTVTKLDFDLEPEPPPAPPRASSLGETDE. The region spanning 656-915 is the Protein kinase domain; it reads FRCCAVLGRG…AEDVKKHPFF (260 aa). ATP is bound by residues 662–670 and Lys-685; that span reads LGRGHFGKV. Asp-781 serves as the catalytic Proton acceptor. Thr-815 is modified (phosphothreonine; by PDPK1). The segment at 916-976 is necessary for the catalytic activity; sequence RLTDWSALMD…EEEQEMFHDF (61 aa). Residues 916-983 enclose the AGC-kinase C-terminal domain; sequence RLTDWSALMD…HDFDYVADWC (68 aa). Ser-951 bears the Phosphoserine mark. Phosphothreonine is present on Thr-957. The negatively regulates the responsiveness of the catalytic activity by cardiolipin and is required for optimal activation by the GTP-bound RhoA stretch occupies residues 977 to 983; it reads DYVADWC.

It belongs to the protein kinase superfamily. AGC Ser/Thr protein kinase family. PKC subfamily. In terms of assembly, interacts (via the REM repeats) with RHOA (GTP-bound form preferentially) and interacts (via the REM repeats) with RAC1 (GTP-bound form preferentially); the interactions induce its autophosphorylation. Interacts with NCK1 (via SH3 domains). Interacts with RHOC. Interacts with NCK1 and NCK2. Interacts with CD44. Interacts (via C-terminal kinase domain) with PDPK1; the interaction stimulates PDPK1 kinase activity. Interacts with MAP3K2; the interaction activates PRK2 kinase activity in a MAP3K2-independent kinase activity. Interacts (via C-terminal domain) with AKT1; the interaction occurs with the C-terminal cleavage product of PRK2 in apoptotic cells. Interacts (via C-terminus) with PTPN13 (via PDZ 3 domain). Interacts with CDK10. In terms of processing, phosphorylated during mitosis. Autophosphorylated. Phosphorylated. Phosphorylated by CDK10. Post-translationally, activated by limited proteolysis with trypsin. Proteolytically cleaved by caspase-3 during the induction of apoptotic cell death. In terms of tissue distribution, ubiquitous. Highly expressed in liver and lung Expressed in astrocytes (at protein level). Ubiquitous.

Its subcellular location is the cytoplasm. The protein localises to the nucleus. It is found in the membrane. The protein resides in the cell projection. It localises to the lamellipodium. Its subcellular location is the cytoskeleton. The protein localises to the cleavage furrow. It is found in the midbody. The protein resides in the cell junction. The enzyme catalyses L-seryl-[protein] + ATP = O-phospho-L-seryl-[protein] + ADP + H(+). It carries out the reaction L-threonyl-[protein] + ATP = O-phospho-L-threonyl-[protein] + ADP + H(+). Its activity is regulated as follows. Kinase activity is activated upon binding to GTP-bound Rho1/Rac1 GTPases. Activated by caspase-3 (CASP3) cleavage during apoptosis. Activated by lipids, particularly cardiolipin and to a lesser extent by other acidic phospholipids and unsaturated fatty acids. Two specific sites, Thr-815 (activation loop of the kinase domain) and Thr-957 (turn motif), need to be phosphorylated for its full activation. PKC-related serine/threonine-protein kinase and Rho/Rac effector protein that participates in specific signal transduction responses in the cell. Plays a role in the regulation of cell cycle progression, actin cytoskeleton assembly, cell migration, cell adhesion, tumor cell invasion and transcription activation signaling processes. Phosphorylates CTTN in hyaluronan-induced astrocytes and hence decreases CTTN ability to associate with filamentous actin. Phosphorylates HDAC5, therefore lead to impair HDAC5 import. Direct RhoA target required for the regulation of the maturation of primordial junctions into apical junction formation in bronchial epithelial cells. Required for G2/M phases of the cell cycle progression and abscission during cytokinesis in a ECT2-dependent manner. Stimulates FYN kinase activity that is required for establishment of skin cell-cell adhesion during keratinocytes differentiation. Regulates epithelial bladder cells speed and direction of movement during cell migration and tumor cell invasion. Inhibits Akt pro-survival-induced kinase activity. Mediates Rho protein-induced transcriptional activation via the c-fos serum response factor (SRF). Involved in the negative regulation of ciliogenesis. In Mus musculus (Mouse), this protein is Serine/threonine-protein kinase N2 (Pkn2).